Reading from the N-terminus, the 143-residue chain is Cofilin (143 aa).

Residue S4 is modified to Phosphoserine. The ADF-H domain maps to 5 to 137 (GVAVADESLT…SYDSVLERVS (133 aa)).

This sequence belongs to the actin-binding proteins ADF family. Interacts with actin and AIP1 in a ternary complex. Post-translationally, the N-terminus is blocked.

The protein localises to the cytoplasm. Its subcellular location is the cytoskeleton. The protein resides in the nucleus matrix. Controls reversibly actin polymerization and depolymerization in a pH-sensitive manner. It has the ability to bind G- and F-actin in a 1:1 ratio of cofilin to actin. Binding to F-actin is regulated by tropomyosin. It is the major component of intranuclear and cytoplasmic actin rods. Required for accumulation of actin at the cell division site via depolymerizing actin at the cell ends. In association with myosin II has a role in the assembly of the contractile ring via severing actin filaments. Involved in the maintenance of the contractile ring once formed. In association with profilin and capping protein, has a role in the mitotic reorganization of the actin cytoskeleton. In effect, yeast cofilin increases the rate of actin polymerization by making new ends available for actin subunit addition. Such a protein complex is important for the polarized growth of yeast cells. The polypeptide is Cofilin (COF1) (Saccharomyces cerevisiae (strain ATCC 204508 / S288c) (Baker's yeast)).